The chain runs to 136 residues: ATP synthase epsilon chain (136 aa).

It belongs to the ATPase epsilon chain family. As to quaternary structure, F-type ATPases have 2 components, CF(1) - the catalytic core - and CF(0) - the membrane proton channel. CF(1) has five subunits: alpha(3), beta(3), gamma(1), delta(1), epsilon(1). CF(0) has three main subunits: a, b and c.

Its subcellular location is the cell membrane. In terms of biological role, produces ATP from ADP in the presence of a proton gradient across the membrane. In Exiguobacterium sp. (strain ATCC BAA-1283 / AT1b), this protein is ATP synthase epsilon chain.